We begin with the raw amino-acid sequence, 118 residues long: Large ribosomal subunit protein uL22 (118 aa).

Belongs to the universal ribosomal protein uL22 family. Part of the 50S ribosomal subunit.

Functionally, this protein binds specifically to 23S rRNA; its binding is stimulated by other ribosomal proteins, e.g. L4, L17, and L20. It is important during the early stages of 50S assembly. It makes multiple contacts with different domains of the 23S rRNA in the assembled 50S subunit and ribosome. The globular domain of the protein is located near the polypeptide exit tunnel on the outside of the subunit, while an extended beta-hairpin is found that lines the wall of the exit tunnel in the center of the 70S ribosome. The polypeptide is Large ribosomal subunit protein uL22 (Nostoc punctiforme (strain ATCC 29133 / PCC 73102)).